Consider the following 182-residue polypeptide: MATLLLEDGTIESNLDEIVRELAPLGIYLKHYDPGTSILFPHLLTQDALTDKEKCHIVDLHNSVFEFIQQENGYLWCDLLNVHPGSPNLQTLIATYAQYHTHTAPEALYVLAGEMIFGFVKPDGSQVQLLVQSQDYLHIPSGVEHWCSLTASLNFKAVRYFTAADGWVPNYTGTRLNDSLNK.

Residues histidine 100, histidine 102, glutamate 106, and histidine 145 each coordinate Fe(2+). 4 residues coordinate Ni(2+): histidine 100, histidine 102, glutamate 106, and histidine 145.

This sequence belongs to the acireductone dioxygenase (ARD) family. Monomer. It depends on Fe(2+) as a cofactor. Ni(2+) is required as a cofactor.

The catalysed reaction is 1,2-dihydroxy-5-(methylsulfanyl)pent-1-en-3-one + O2 = 3-(methylsulfanyl)propanoate + CO + formate + 2 H(+). The enzyme catalyses 1,2-dihydroxy-5-(methylsulfanyl)pent-1-en-3-one + O2 = 4-methylsulfanyl-2-oxobutanoate + formate + 2 H(+). It participates in amino-acid biosynthesis; L-methionine biosynthesis via salvage pathway; L-methionine from S-methyl-5-thio-alpha-D-ribose 1-phosphate: step 5/6. Its function is as follows. Catalyzes 2 different reactions between oxygen and the acireductone 1,2-dihydroxy-3-keto-5-methylthiopentene (DHK-MTPene) depending upon the metal bound in the active site. Fe-containing acireductone dioxygenase (Fe-ARD) produces formate and 2-keto-4-methylthiobutyrate (KMTB), the alpha-ketoacid precursor of methionine in the methionine recycle pathway. Ni-containing acireductone dioxygenase (Ni-ARD) produces methylthiopropionate, carbon monoxide and formate, and does not lie on the methionine recycle pathway. This is Acireductone dioxygenase from Nostoc sp. (strain PCC 7120 / SAG 25.82 / UTEX 2576).